We begin with the raw amino-acid sequence, 295 residues long: Ribosomal RNA small subunit methyltransferase A (295 aa).

Asn-31, Leu-33, Gly-58, Glu-79, Asp-104, and Asn-129 together coordinate S-adenosyl-L-methionine.

It belongs to the class I-like SAM-binding methyltransferase superfamily. rRNA adenine N(6)-methyltransferase family. RsmA subfamily.

The protein localises to the cytoplasm. The catalysed reaction is adenosine(1518)/adenosine(1519) in 16S rRNA + 4 S-adenosyl-L-methionine = N(6)-dimethyladenosine(1518)/N(6)-dimethyladenosine(1519) in 16S rRNA + 4 S-adenosyl-L-homocysteine + 4 H(+). In terms of biological role, specifically dimethylates two adjacent adenosines (A1518 and A1519) in the loop of a conserved hairpin near the 3'-end of 16S rRNA in the 30S particle. May play a critical role in biogenesis of 30S subunits. The protein is Ribosomal RNA small subunit methyltransferase A of Leuconostoc citreum (strain KM20).